Reading from the N-terminus, the 158-residue chain is Endoribonuclease YbeY (158 aa).

3 residues coordinate Zn(2+): histidine 118, histidine 122, and histidine 128.

It belongs to the endoribonuclease YbeY family. It depends on Zn(2+) as a cofactor.

The protein resides in the cytoplasm. Its function is as follows. Single strand-specific metallo-endoribonuclease involved in late-stage 70S ribosome quality control and in maturation of the 3' terminus of the 16S rRNA. This Bartonella henselae (strain ATCC 49882 / DSM 28221 / CCUG 30454 / Houston 1) (Rochalimaea henselae) protein is Endoribonuclease YbeY.